The primary structure comprises 311 residues: Sulfate adenylyltransferase subunit 2 (311 aa).

It belongs to the PAPS reductase family. CysD subfamily. In terms of assembly, heterodimer composed of CysD, the smaller subunit, and CysN.

It catalyses the reaction sulfate + ATP + H(+) = adenosine 5'-phosphosulfate + diphosphate. It participates in sulfur metabolism; hydrogen sulfide biosynthesis; sulfite from sulfate: step 1/3. With CysN forms the ATP sulfurylase (ATPS) that catalyzes the adenylation of sulfate producing adenosine 5'-phosphosulfate (APS) and diphosphate, the first enzymatic step in sulfur assimilation pathway. APS synthesis involves the formation of a high-energy phosphoric-sulfuric acid anhydride bond driven by GTP hydrolysis by CysN coupled to ATP hydrolysis by CysD. This is Sulfate adenylyltransferase subunit 2 from Caulobacter vibrioides (strain ATCC 19089 / CIP 103742 / CB 15) (Caulobacter crescentus).